The primary structure comprises 45 residues: Large ribosomal subunit protein bL34 (45 aa).

A compositionally biased stretch (polar residues) spans 1–10 (MTQRTLGGTN). Positions 1–45 (MTQRTLGGTNRKQKRTSGFRARMRKSNGRKVIQARRKKGRHRLSV) are disordered. Positions 11–45 (RKQKRTSGFRARMRKSNGRKVIQARRKKGRHRLSV) are enriched in basic residues.

This sequence belongs to the bacterial ribosomal protein bL34 family.

In Crocosphaera subtropica (strain ATCC 51142 / BH68) (Cyanothece sp. (strain ATCC 51142)), this protein is Large ribosomal subunit protein bL34.